We begin with the raw amino-acid sequence, 175 residues long: B9 domain-containing protein 2 (175 aa).

Positions 2-118 constitute a C2 B9-type domain; the sequence is AEVHVIGQIM…DCPTWRPLGS (117 aa).

This sequence belongs to the B9D family. As to quaternary structure, part of the tectonic-like complex (also named B9 complex). Interacts with TUBG1.

The protein resides in the cytoplasm. It is found in the cytoskeleton. The protein localises to the cilium basal body. It localises to the cilium axoneme. Its subcellular location is the nucleus. Functionally, component of the tectonic-like complex, a complex localized at the transition zone of primary cilia and acting as a barrier that prevents diffusion of transmembrane proteins between the cilia and plasma membranes. In Bos taurus (Bovine), this protein is B9 domain-containing protein 2 (B9D2).